A 538-amino-acid chain; its full sequence is NAD(P)H-quinone oxidoreductase chain 4 (538 aa).

The next 14 membrane-spanning stretches (helical) occupy residues 11 to 31, 43 to 63, 95 to 115, 119 to 139, 143 to 163, 175 to 195, 217 to 237, 251 to 271, 285 to 305, 314 to 334, 340 to 360, 382 to 404, 425 to 445, and 472 to 492; these read FPWLSLSIFFPIVGALIVPFI, YALIIALITFLITVAAYFKGF, MPLILLTSFITSLAVLAAWPV, PKLFFFLILAMDGGQIAVFAV, LLFFLAWELELFPVYLFLAIW, FIIYTAGSSLFILLAGLAMGF, GFQLLCYSGLLIAFGVKLPIV, TAPVHMLLAGILLKMGGYALL, FAPLLIVLGVVNIIYAALTSF, IAYSSISHMGFVLIGIGSFSS, AMLQMVSHGLIGASLFFLVGA, IMFALWTACAFASLALPGMSGFI, IVVASLAAIGVILTPIYLLSM, and IYIIACLLVPIIGIGLYPKIM.

The protein belongs to the complex I subunit 4 family.

Its subcellular location is the cellular thylakoid membrane. The catalysed reaction is a plastoquinone + NADH + (n+1) H(+)(in) = a plastoquinol + NAD(+) + n H(+)(out). It carries out the reaction a plastoquinone + NADPH + (n+1) H(+)(in) = a plastoquinol + NADP(+) + n H(+)(out). Its function is as follows. NDH-1 shuttles electrons from NAD(P)H, via FMN and iron-sulfur (Fe-S) centers, to quinones in the respiratory chain. The immediate electron acceptor for the enzyme in this species is believed to be plastoquinone. Couples the redox reaction to proton translocation (for every two electrons transferred, four hydrogen ions are translocated across the cytoplasmic membrane), and thus conserves the redox energy in a proton gradient. This Prochlorococcus marinus (strain NATL2A) protein is NAD(P)H-quinone oxidoreductase chain 4.